A 341-amino-acid polypeptide reads, in one-letter code: Mitochondrial protein C2orf69 homolog (341 aa).

The N-terminal 35 residues, 1–35 (MLQVVQSPHNLVFMGSIRSVVACLSLAAVARKMTA), are a transit peptide targeting the mitochondrion.

The protein belongs to the C2orf69 family.

The protein localises to the mitochondrion matrix. Functionally, may play a role in the respiratory chain. The protein is Mitochondrial protein C2orf69 homolog of Danio rerio (Zebrafish).